The chain runs to 615 residues: DNA mismatch repair protein MutL (615 aa).

The protein belongs to the DNA mismatch repair MutL/HexB family.

This protein is involved in the repair of mismatches in DNA. It is required for dam-dependent methyl-directed DNA mismatch repair. May act as a 'molecular matchmaker', a protein that promotes the formation of a stable complex between two or more DNA-binding proteins in an ATP-dependent manner without itself being part of a final effector complex. This is DNA mismatch repair protein MutL from Histophilus somni (strain 2336) (Haemophilus somnus).